Reading from the N-terminus, the 166-residue chain is Large ribosomal subunit protein uL10 (166 aa).

This sequence belongs to the universal ribosomal protein uL10 family. As to quaternary structure, part of the ribosomal stalk of the 50S ribosomal subunit. The N-terminus interacts with L11 and the large rRNA to form the base of the stalk. The C-terminus forms an elongated spine to which L12 dimers bind in a sequential fashion forming a multimeric L10(L12)X complex.

Its function is as follows. Forms part of the ribosomal stalk, playing a central role in the interaction of the ribosome with GTP-bound translation factors. The polypeptide is Large ribosomal subunit protein uL10 (Streptococcus pneumoniae (strain ATCC 700669 / Spain 23F-1)).